We begin with the raw amino-acid sequence, 255 residues long: Ribonuclease HII (255 aa).

Residues 72 to 255 (AIICGIDEVG…KSFEPIKSLL (184 aa)) form the RNase H type-2 domain. Asp78, Glu79, and Asp170 together coordinate a divalent metal cation.

Belongs to the RNase HII family. Mn(2+) serves as cofactor. The cofactor is Mg(2+).

The protein localises to the cytoplasm. It carries out the reaction Endonucleolytic cleavage to 5'-phosphomonoester.. Functionally, endonuclease that specifically degrades the RNA of RNA-DNA hybrids. The protein is Ribonuclease HII of Staphylococcus aureus (strain bovine RF122 / ET3-1).